The chain runs to 73 residues: Toxin Td12 (73 aa).

The signal sequence occupies residues 1 to 7 (IGMVIEC). The LCN-type CS-alpha/beta domain maps to 8–70 (KDGYLMEPNG…TWDRATNTCG (63 aa)). Cystine bridges form between Cys18-Cys69, Cys22-Cys44, Cys30-Cys50, and Cys34-Cys52. The residue at position 71 (Arg71) is an Arginine amide.

The protein belongs to the long (4 C-C) scorpion toxin superfamily. Sodium channel inhibitor family. Beta subfamily. As to expression, expressed by the venom gland.

The protein localises to the secreted. Functionally, beta toxins bind voltage-independently at site-4 of sodium channels (Nav) and shift the voltage of activation toward more negative potentials thereby affecting sodium channel activation and promoting spontaneous and repetitive firing. This is Toxin Td12 from Tityus discrepans (Venezuelan scorpion).